The sequence spans 218 residues: Large ribosomal subunit protein uL3 (218 aa).

This sequence belongs to the universal ribosomal protein uL3 family. As to quaternary structure, part of the 50S ribosomal subunit. Forms a cluster with proteins L14 and L19.

One of the primary rRNA binding proteins, it binds directly near the 3'-end of the 23S rRNA, where it nucleates assembly of the 50S subunit. This Mycolicibacterium gilvum (strain PYR-GCK) (Mycobacterium gilvum (strain PYR-GCK)) protein is Large ribosomal subunit protein uL3.